Here is a 423-residue protein sequence, read N- to C-terminus: Methanol:N,N-dimethyl-4-nitrosoaniline oxidoreductase (423 aa).

This sequence belongs to the iron-containing alcohol dehydrogenase family. In terms of assembly, homodecamer. Requires Mg(2+) as cofactor. It depends on Zn(2+) as a cofactor. The cofactor is NADPH.

It carries out the reaction methanol + A = formaldehyde + AH2. Its function is as follows. Catalyzes the oxidation of methanol to yield formaldehyde. While the in vivo electron acceptor is not known, N,N-dimethyl-4-nitrosoaniline (NDMA) can serve this function in vitro and is reduced to 4-(hydroxylamino)-N,N-dimethylaniline. It is also able to use ethanol and formaldehyde with an activity comparable to methanol, and has a weak activity with methylamine as substrate. The sequence is that of Methanol:N,N-dimethyl-4-nitrosoaniline oxidoreductase from Mycobacterium sp. (strain DSM 3803 / JC1).